A 144-amino-acid chain; its full sequence is uncharacterized protein (144 aa).

This is an uncharacterized protein from Bacillus subtilis (strain 168).